Consider the following 169-residue polypeptide: Protein ORFb in retron Ec67 (169 aa).

In Escherichia coli, this protein is Protein ORFb in retron Ec67.